The sequence spans 241 residues: Triosephosphate isomerase (241 aa).

9–11 provides a ligand contact to substrate; it reads NWK. The active-site Electrophile is the His96. Glu165 serves as the catalytic Proton acceptor. Residues Gly171, Ser204, and 225–226 contribute to the substrate site; that span reads GG.

Belongs to the triosephosphate isomerase family. In terms of assembly, homodimer.

The protein resides in the cytoplasm. The enzyme catalyses D-glyceraldehyde 3-phosphate = dihydroxyacetone phosphate. It functions in the pathway carbohydrate biosynthesis; gluconeogenesis. The protein operates within carbohydrate degradation; glycolysis; D-glyceraldehyde 3-phosphate from glycerone phosphate: step 1/1. Its function is as follows. Involved in the gluconeogenesis. Catalyzes stereospecifically the conversion of dihydroxyacetone phosphate (DHAP) to D-glyceraldehyde-3-phosphate (G3P). The polypeptide is Triosephosphate isomerase (Prochlorococcus marinus (strain MIT 9312)).